The primary structure comprises 200 residues: MPPLLKLALELGPLLVFFFANARGEMLIERFPILGSIGAPIFLATALFMAATVIALAISWSMTRTLAIMPLVSGIVVLVFGALTLWLHNDTFIKMKPTIVNTLFGGILLGGLFFGKSLLGYVFDSAFRLDAEGWRKLTLRWGLFFIFLAIVNEIVWRNFSTDTWVSFKVWGIMPITIVFTLLQMPLIQKHSLTDEENTAS.

The next 6 helical transmembrane spans lie at 1 to 21, 37 to 57, 66 to 86, 103 to 123, 136 to 156, and 167 to 187; these read MPPL…FFAN, IGAP…IALA, LAIM…LTLW, LFGG…GYVF, KLTL…EIVW, and FKVW…MPLI.

The protein belongs to the YciB family.

Its subcellular location is the cell inner membrane. Functionally, plays a role in cell envelope biogenesis, maintenance of cell envelope integrity and membrane homeostasis. This Brucella melitensis biotype 1 (strain ATCC 23456 / CCUG 17765 / NCTC 10094 / 16M) protein is Inner membrane-spanning protein YciB.